Reading from the N-terminus, the 208-residue chain is Uracil phosphoribosyltransferase (208 aa).

Residues arginine 78, arginine 103, and 130 to 138 (DPMLATGGT) each bind 5-phospho-alpha-D-ribose 1-diphosphate. Residues isoleucine 193 and 198–200 (GDA) each bind uracil. Aspartate 199 contacts 5-phospho-alpha-D-ribose 1-diphosphate.

Belongs to the UPRTase family. Mg(2+) is required as a cofactor.

The catalysed reaction is UMP + diphosphate = 5-phospho-alpha-D-ribose 1-diphosphate + uracil. It functions in the pathway pyrimidine metabolism; UMP biosynthesis via salvage pathway; UMP from uracil: step 1/1. Allosterically activated by GTP. Functionally, catalyzes the conversion of uracil and 5-phospho-alpha-D-ribose 1-diphosphate (PRPP) to UMP and diphosphate. This chain is Uracil phosphoribosyltransferase, found in Blochmanniella floridana.